We begin with the raw amino-acid sequence, 348 residues long: MLLDDRKLKILQAIIDDYIYSAEPVGSRTIAKKHELGLSSATIRNEMADLEEMGLLEQPYTSAGRIPSDRGYRLYVDQLMKIDELNECEIEKIRSDMNIRINELSQLIRSASAVMAKITKYTSMAVSPHMKKSVLKSVQVVPIESGKALVIIVTDANIVRNNLIRIPESVTPAFLIQISNMLNEQLKGFTLEMLKSDILNEKFEKLTALPFRLIKPILDGIEELIITIDNPEVYLEGATNILNFPEFKEVDKAKEFLNILDEKKLVSDLLTNSVNDNNEIIIHIGNENAMEGIKDCSLVTASYSVGNHVIGTIGIIGPTRMEYSRVVSSMNYIRNKINQEILKLLDNG.

This sequence belongs to the HrcA family.

In terms of biological role, negative regulator of class I heat shock genes (grpE-dnaK-dnaJ and groELS operons). Prevents heat-shock induction of these operons. This is Heat-inducible transcription repressor HrcA from Ruminiclostridium cellulolyticum (strain ATCC 35319 / DSM 5812 / JCM 6584 / H10) (Clostridium cellulolyticum).